Reading from the N-terminus, the 161-residue chain is Allophycocyanin alpha chain (161 aa).

The residue at position 71 (Asn-71) is an N4-methylasparagine. (2R,3E)-phycocyanobilin is bound at residue Cys-81.

Belongs to the phycobiliprotein family. In terms of assembly, component of the phycobilisome. Heterodimer of an alpha and a beta chain. In terms of processing, contains one covalently linked phycocyanobilin chromophore.

It localises to the cellular thylakoid membrane. Functionally, light-harvesting photosynthetic bile pigment-protein from the phycobiliprotein complex. Allophycocyanin has a maximum absorption at approximately 650 nanometers. The protein is Allophycocyanin alpha chain (apcA) of Arthrospira platensis (Spirulina platensis).